We begin with the raw amino-acid sequence, 400 residues long: tRNA(Met) cytidine acetate ligase (400 aa).

ATP is bound by residues I7 to H20, G101, N159, and R184.

It belongs to the TmcAL family.

The protein resides in the cytoplasm. It carries out the reaction cytidine(34) in elongator tRNA(Met) + acetate + ATP = N(4)-acetylcytidine(34) in elongator tRNA(Met) + AMP + diphosphate. Its function is as follows. Catalyzes the formation of N(4)-acetylcytidine (ac(4)C) at the wobble position of elongator tRNA(Met), using acetate and ATP as substrates. First activates an acetate ion to form acetyladenylate (Ac-AMP) and then transfers the acetyl group to tRNA to form ac(4)C34. The chain is tRNA(Met) cytidine acetate ligase from Caldicellulosiruptor saccharolyticus (strain ATCC 43494 / DSM 8903 / Tp8T 6331).